The primary structure comprises 1154 residues: ATP-dependent RNA helicase DBP10 (1154 aa).

The disordered stretch occupies residues Phe16 to Phe58. Residues Ile21–Lys38 show a composition bias toward polar residues. A Q motif motif is present at residues Gly144–Arg172. The Helicase ATP-binding domain maps to Ala177–Leu363. An ATP-binding site is contributed by Ala190–Thr197. A DEAD box motif is present at residues Asp311 to Asp314. 4 disordered regions span residues Gln417–Gly462, Ile826–Ala859, Phe885–Tyr939, and Met1043–Arg1154. Basic and acidic residues predominate over residues Arg438–Leu451. In terms of domain architecture, Helicase C-terminal spans Thr446–Ala602. 2 stretches are compositionally biased toward basic residues: residues Val844 to Thr855 and Arg918 to Lys927. Basic and acidic residues-rich tracts occupy residues Met1043 to Pro1061 and Ala1098 to Arg1133. A compositionally biased stretch (basic residues) spans Arg1134–Arg1154.

The protein belongs to the DEAD box helicase family. DDX54/DBP10 subfamily.

It localises to the nucleus. It is found in the nucleolus. The enzyme catalyses ATP + H2O = ADP + phosphate + H(+). Its function is as follows. ATP-binding RNA helicase involved in the biogenesis of 60S ribosomal subunits and is required for the normal formation of 25S and 5.8S rRNAs. In Mycosarcoma maydis (Corn smut fungus), this protein is ATP-dependent RNA helicase DBP10 (DBP10).